We begin with the raw amino-acid sequence, 585 residues long: ATP-dependent lipid A-core flippase (585 aa).

Helical transmembrane passes span 24–44, 65–85, 143–163, 165–185, and 253–273; these read LWKV…ASAA, LLVP…SFCG, ITVV…MIYV, WKLT…IGYV, and PIIQ…ALSP. An ABC transmembrane type-1 domain is found at 29 to 310; it reads ALAVLGNVIY…LTEVNAVIQR (282 aa). One can recognise an ABC transporter domain in the interval 342–578; the sequence is LEFKSLGFAY…DGAYAALHKL (237 aa). Residue 376-383 coordinates ATP; sequence GRSGSGKS.

It belongs to the ABC transporter superfamily. Lipid exporter (TC 3.A.1.106) family. Homodimer.

The protein localises to the cell inner membrane. The catalysed reaction is ATP + H2O + lipid A-core oligosaccharideSide 1 = ADP + phosphate + lipid A-core oligosaccharideSide 2.. Involved in lipopolysaccharide (LPS) biosynthesis. Translocates lipid A-core from the inner to the outer leaflet of the inner membrane. Transmembrane domains (TMD) form a pore in the inner membrane and the ATP-binding domain (NBD) is responsible for energy generation. The polypeptide is ATP-dependent lipid A-core flippase (Hahella chejuensis (strain KCTC 2396)).